Reading from the N-terminus, the 302-residue chain is 4-hydroxy-tetrahydrodipicolinate synthase (302 aa).

A pyruvate-binding site is contributed by Thr-56. Residue Tyr-145 is the Proton donor/acceptor of the active site. Lys-173 functions as the Schiff-base intermediate with substrate in the catalytic mechanism. Val-215 is a binding site for pyruvate.

It belongs to the DapA family. As to quaternary structure, homotetramer; dimer of dimers.

Its subcellular location is the cytoplasm. It catalyses the reaction L-aspartate 4-semialdehyde + pyruvate = (2S,4S)-4-hydroxy-2,3,4,5-tetrahydrodipicolinate + H2O + H(+). It participates in amino-acid biosynthesis; L-lysine biosynthesis via DAP pathway; (S)-tetrahydrodipicolinate from L-aspartate: step 3/4. Catalyzes the condensation of (S)-aspartate-beta-semialdehyde [(S)-ASA] and pyruvate to 4-hydroxy-tetrahydrodipicolinate (HTPA). The sequence is that of 4-hydroxy-tetrahydrodipicolinate synthase from Prochlorococcus marinus subsp. pastoris (strain CCMP1986 / NIES-2087 / MED4).